Consider the following 437-residue polypeptide: Adenylyltransferase and sulfurtransferase MOCS3 (437 aa).

ATP contacts are provided by residues glycine 82, aspartate 103, 110-114 (TNLHR), lysine 127, and 171-172 (DN). Zn(2+) contacts are provided by cysteine 212 and cysteine 215. Cysteine 229 functions as the Glycyl thioester intermediate; for adenylyltransferase activity in the catalytic mechanism. Residues cysteine 287 and cysteine 290 each coordinate Zn(2+). A Rhodanese domain is found at 337–435 (SNVPHLLVDV…WTHNIDPEFP (99 aa)). Cysteine 391 acts as the Cysteine persulfide intermediate; for sulfurtransferase activity in catalysis.

The protein in the N-terminal section; belongs to the HesA/MoeB/ThiF family. UBA4 subfamily. It depends on Zn(2+) as a cofactor.

The protein localises to the cytoplasm. Its subcellular location is the cytosol. It carries out the reaction [molybdopterin-synthase sulfur-carrier protein]-C-terminal Gly-Gly + ATP + H(+) = [molybdopterin-synthase sulfur-carrier protein]-C-terminal Gly-Gly-AMP + diphosphate. The enzyme catalyses [molybdopterin-synthase sulfur-carrier protein]-C-terminal Gly-Gly-AMP + S-sulfanyl-L-cysteinyl-[cysteine desulfurase] + AH2 = [molybdopterin-synthase sulfur-carrier protein]-C-terminal-Gly-aminoethanethioate + L-cysteinyl-[cysteine desulfurase] + A + AMP + 2 H(+). The protein operates within tRNA modification; 5-methoxycarbonylmethyl-2-thiouridine-tRNA biosynthesis. It functions in the pathway cofactor biosynthesis; molybdopterin biosynthesis. In terms of biological role, plays a central role in 2-thiolation of mcm(5)S(2)U at tRNA wobble positions of cytosolic tRNA(Lys), tRNA(Glu) and tRNA(Gln). Also essential during biosynthesis of the molybdenum cofactor. Acts by mediating the C-terminal thiocarboxylation of sulfur carriers URM1 and MOCS2A. Its N-terminus first activates URM1 and MOCS2A as acyl-adenylates (-COAMP), then the persulfide sulfur on the catalytic cysteine is transferred to URM1 and MOCS2A to form thiocarboxylation (-COSH) of their C-terminus. The reaction probably involves hydrogen sulfide that is generated from the persulfide intermediate and that acts as a nucleophile towards URM1 and MOCS2A. Subsequently, a transient disulfide bond is formed. Does not use thiosulfate as sulfur donor; NFS1 probably acting as a sulfur donor for thiocarboxylation reactions. In Aedes aegypti (Yellowfever mosquito), this protein is Adenylyltransferase and sulfurtransferase MOCS3.